The chain runs to 167 residues: Ubiquitin-fold modifier-conjugating enzyme 1 (167 aa).

The active-site Glycyl thioester intermediate is the Cys-116.

Belongs to the ubiquitin-conjugating enzyme family. UFC1 subfamily. Interacts with UBA5 (via C-terminus). Interacts with UFL1. Interacts with UFM1.

E2-like enzyme which specifically catalyzes the second step in ufmylation. Accepts the ubiquitin-like modifier UFM1 from the E1 enzyme UBA5 and forms an intermediate with UFM1 via a thioester linkage. Ufmylation is involved in various processes, such as ribosome recycling, response to DNA damage, interferon response or reticulophagy (also called ER-phagy). This chain is Ubiquitin-fold modifier-conjugating enzyme 1, found in Salmo salar (Atlantic salmon).